We begin with the raw amino-acid sequence, 361 residues long: DNA replication and repair protein RecF (361 aa).

Residue 30 to 37 (GPNGSGKT) coordinates ATP.

This sequence belongs to the RecF family.

The protein localises to the cytoplasm. In terms of biological role, the RecF protein is involved in DNA metabolism; it is required for DNA replication and normal SOS inducibility. RecF binds preferentially to single-stranded, linear DNA. It also seems to bind ATP. This Yersinia pestis protein is DNA replication and repair protein RecF.